A 238-amino-acid polypeptide reads, in one-letter code: Protein lifeguard 4 (238 aa).

Residues 1–38 (MADTDPGYPRSSIEDDFNYGSCVASASVHIRMAFLRKV) lie on the Cytoplasmic side of the membrane. Residues 39-59 (YSILSLQVLLTTVTSALFLYF) form a helical membrane-spanning segment. Topologically, residues 60-68 (QALRTFVHE) are lumenal. The chain crosses the membrane as a helical span at residues 69–89 (SPALIVVFALGSLGLIFALTL). Topologically, residues 90 to 97 (HRHTHPLN) are cytoplasmic. The chain crosses the membrane as a helical span at residues 98-118 (LYLLFAFTLSESLAVAAVVTF). At 119–120 (YD) the chain is on the lumenal side. Residues 121 to 141 (VYLVLQAFIMTTAVFLGLTAY) traverse the membrane as a helical segment. Over 142-151 (TLQSKRDFTK) the chain is Cytoplasmic. A helical transmembrane segment spans residues 152–172 (FGAGLFAGLWILCLAGFLKLF). Residues 173 to 175 (FYS) are Lumenal-facing. The helical transmembrane segment at 176–196 (ETMELVLASLGALLFCGFIIY) threads the bilayer. Over 197–208 (DTHSLMHRLSPE) the chain is Cytoplasmic. Residues 209–229 (EYVIAAISLYMDIINLFLHLL) constitute an intramembrane region (helical). At 230 to 238 (KFLEAVNKK) the chain is on the cytoplasmic side.

Belongs to the BI1 family. LFG subfamily. In terms of assembly, interacts with ITPR3.

The protein localises to the golgi apparatus membrane. In terms of biological role, anti-apoptotic protein which can inhibit apoptosis induced by intrinsic and extrinsic apoptotic stimuli. Can modulate both capacitative Ca2+ entry and inositol 1,4,5-trisphosphate (IP3)-mediated Ca2+ release. The chain is Protein lifeguard 4 (Tmbim4) from Mus musculus (Mouse).